The following is a 2571-amino-acid chain: Highly reducing polyketide synthase 19 (2571 aa).

Positions 1–51 are disordered; it reads MSPIFLGDSEDAATCRCGPPSSPSPELSGTETALTSDSDGPELLNPGPQGP. Polar residues predominate over residues 27-38; the sequence is LSGTETALTSDS. The Ketosynthase family 3 (KS3) domain occupies 51–485; it reads PEPIAIIGMG…GANAHCILES (435 aa). Residues cysteine 224, histidine 359, and histidine 398 each act as for beta-ketoacyl synthase activity in the active site. The tract at residues 609-932 is malonyl-CoA:ACP transacylase (MAT) domain; that stretch reads VFTGQGAQWA…PYNSALLRGK (324 aa). Serine 701 functions as the For malonyltransferase activity in the catalytic mechanism. The interval 1019-1163 is N-terminal hotdog fold; sequence HDLLGSRVPG…GLVKLTQNED (145 aa). Residues 1019 to 1340 form a dehydratase (DH) domain region; sequence HDLLGSRVPG…SGCRMVPYSS (322 aa). The region spanning 1019-1344 is the PKS/mFAS DH domain; sequence HDLLGSRVPG…MVPYSSGTAV (326 aa). Histidine 1051 serves as the catalytic Proton acceptor; for dehydratase activity. Residues 1177–1344 are C-terminal hotdog fold; sequence MEQSAPRTWY…MVPYSSGTAV (168 aa). Aspartate 1241 acts as the Proton donor; for dehydratase activity in catalysis. Residues 1800 to 2140 are enoyl reductase (ER) domain; that stretch reads NMSDAFVFTR…AFRALSGSTT (341 aa). The segment at 2177–2355 is ketoreductase (KR) domain; sequence SYLLVGCLGG…ATSVGLGMIS (179 aa). One can recognise a Carrier domain in the interval 2490–2568; sequence AVAAQALELV…MLSELIAGKL (79 aa). Serine 2527 bears the O-(pantetheine 4'-phosphoryl)serine mark.

It functions in the pathway polyketide biosynthesis. In terms of biological role, highly reducing polyketide synthase; part of the gene cluster that mediates the biosynthesis of pyriculol and pyriculariol, two heptaketides that induce lesion formation upon application on rice leaves but are dispensable for pathogenicity. The highly reducing polyketide synthase synthesizes the heptaketide backbone of pyriculol and pyriculariol. Pyriculol and pyriculariol contain several hydroxyl moieties and double bonds, so it can be assumed that several reduction steps occur during biosynthesis. These reactions could be executed by PKS19 itself or partly by the tailoring enzymes OXR1, PXR2, RED1, RED2 or RED3, identified within the cluster. The FAD-linked oxidoreductase OXR1 is the only tailoring enzyme for which the function has been determined yet, and is involved in the oxidation of dihydropyriculol and dihydropyriculariol into pyriculol and pyriculariol, respectively. The sequence is that of Highly reducing polyketide synthase 19 from Pyricularia oryzae (strain 70-15 / ATCC MYA-4617 / FGSC 8958) (Rice blast fungus).